We begin with the raw amino-acid sequence, 318 residues long: 4-hydroxy-3-methylbut-2-enyl diphosphate reductase (318 aa).

Cysteine 21 lines the [4Fe-4S] cluster pocket. (2E)-4-hydroxy-3-methylbut-2-enyl diphosphate-binding residues include histidine 50 and histidine 83. The dimethylallyl diphosphate site is built by histidine 50 and histidine 83. The isopentenyl diphosphate site is built by histidine 50 and histidine 83. Position 105 (cysteine 105) interacts with [4Fe-4S] cluster. Histidine 133 serves as a coordination point for (2E)-4-hydroxy-3-methylbut-2-enyl diphosphate. Histidine 133 is a dimethylallyl diphosphate binding site. Histidine 133 contributes to the isopentenyl diphosphate binding site. Glutamate 135 serves as the catalytic Proton donor. Threonine 176 contacts (2E)-4-hydroxy-3-methylbut-2-enyl diphosphate. Position 206 (cysteine 206) interacts with [4Fe-4S] cluster. Residues serine 234, serine 235, asparagine 236, and serine 278 each coordinate (2E)-4-hydroxy-3-methylbut-2-enyl diphosphate. The dimethylallyl diphosphate site is built by serine 234, serine 235, asparagine 236, and serine 278. Residues serine 234, serine 235, asparagine 236, and serine 278 each coordinate isopentenyl diphosphate.

The protein belongs to the IspH family. Requires [4Fe-4S] cluster as cofactor.

It carries out the reaction isopentenyl diphosphate + 2 oxidized [2Fe-2S]-[ferredoxin] + H2O = (2E)-4-hydroxy-3-methylbut-2-enyl diphosphate + 2 reduced [2Fe-2S]-[ferredoxin] + 2 H(+). The catalysed reaction is dimethylallyl diphosphate + 2 oxidized [2Fe-2S]-[ferredoxin] + H2O = (2E)-4-hydroxy-3-methylbut-2-enyl diphosphate + 2 reduced [2Fe-2S]-[ferredoxin] + 2 H(+). It participates in isoprenoid biosynthesis; dimethylallyl diphosphate biosynthesis; dimethylallyl diphosphate from (2E)-4-hydroxy-3-methylbutenyl diphosphate: step 1/1. Its pathway is isoprenoid biosynthesis; isopentenyl diphosphate biosynthesis via DXP pathway; isopentenyl diphosphate from 1-deoxy-D-xylulose 5-phosphate: step 6/6. Functionally, catalyzes the conversion of 1-hydroxy-2-methyl-2-(E)-butenyl 4-diphosphate (HMBPP) into a mixture of isopentenyl diphosphate (IPP) and dimethylallyl diphosphate (DMAPP). Acts in the terminal step of the DOXP/MEP pathway for isoprenoid precursor biosynthesis. The sequence is that of 4-hydroxy-3-methylbut-2-enyl diphosphate reductase from Shewanella oneidensis (strain ATCC 700550 / JCM 31522 / CIP 106686 / LMG 19005 / NCIMB 14063 / MR-1).